Here is a 154-residue protein sequence, read N- to C-terminus: Myoglobin (154 aa).

The Globin domain maps to 2–148 (GLSDGEWQLV…FRKDIAAKYK (147 aa)). Position 4 is a phosphoserine (Ser-4). His-65 contacts nitrite. His-65 contacts O2. Thr-68 bears the Phosphothreonine mark. His-94 contacts heme b.

Belongs to the globin family. In terms of assembly, monomeric.

The protein resides in the cytoplasm. It is found in the sarcoplasm. The enzyme catalyses Fe(III)-heme b-[protein] + nitric oxide + H2O = Fe(II)-heme b-[protein] + nitrite + 2 H(+). It carries out the reaction H2O2 + AH2 = A + 2 H2O. Functionally, monomeric heme protein which primary function is to store oxygen and facilitate its diffusion within muscle tissues. Reversibly binds oxygen through a pentacoordinated heme iron and enables its timely and efficient release as needed during periods of heightened demand. Depending on the oxidative conditions of tissues and cells, and in addition to its ability to bind oxygen, it also has a nitrite reductase activity whereby it regulates the production of bioactive nitric oxide. Under stress conditions, like hypoxia and anoxia, it also protects cells against reactive oxygen species thanks to its pseudoperoxidase activity. The sequence is that of Myoglobin (MB) from Castor fiber (Eurasian beaver).